Reading from the N-terminus, the 262-residue chain is Hydroxyethylthiazole kinase (262 aa).

Substrate is bound at residue methionine 44. Positions 118 and 166 each coordinate ATP. Residue glycine 193 participates in substrate binding.

Belongs to the Thz kinase family. The cofactor is Mg(2+).

The catalysed reaction is 5-(2-hydroxyethyl)-4-methylthiazole + ATP = 4-methyl-5-(2-phosphooxyethyl)-thiazole + ADP + H(+). It functions in the pathway cofactor biosynthesis; thiamine diphosphate biosynthesis; 4-methyl-5-(2-phosphoethyl)-thiazole from 5-(2-hydroxyethyl)-4-methylthiazole: step 1/1. In terms of biological role, catalyzes the phosphorylation of the hydroxyl group of 4-methyl-5-beta-hydroxyethylthiazole (THZ). This Chlamydia felis (strain Fe/C-56) (Chlamydophila felis) protein is Hydroxyethylthiazole kinase.